We begin with the raw amino-acid sequence, 147 residues long: Large ribosomal subunit protein bL9 (147 aa).

Belongs to the bacterial ribosomal protein bL9 family.

Its function is as follows. Binds to the 23S rRNA. The chain is Large ribosomal subunit protein bL9 from Bacteroides fragilis (strain ATCC 25285 / DSM 2151 / CCUG 4856 / JCM 11019 / LMG 10263 / NCTC 9343 / Onslow / VPI 2553 / EN-2).